Reading from the N-terminus, the 179-residue chain is MKTMFLLALLAFTATSAVAQLYTTCSQGYGQCQQQPQPQPQPQPQMNTCAAFLQQCIQTPYVQSQMWQASGCQLMRQQCCQPLAQISEQARCQAVCSVSQIIMRQQQGQRFGQPQQQQGQSFGQPQQQVPVEIMRMVLQTLPSMCSVNIPQYCTTTPCSTITPAIYSIPMTATCAGGAC.

An N-terminal signal peptide occupies residues 1 to 19; sequence MKTMFLLALLAFTATSAVA.

Belongs to the prolamin family. Post-translationally, contains 7 disulfide bonds.

Its function is as follows. Seed storage protein. Not integrated in the gluten polymer through disulfide bonds, unless incorporated by reduction and reoxidation during dough making. Increases dough strength and bread volume, but decreases dough stability when added into a base wheat flour. The sequence is that of Avenin-like a2 from Triticum aestivum (Wheat).